Consider the following 143-residue polypeptide: Large-conductance mechanosensitive channel (143 aa).

3 helical membrane-spanning segments follow: residues 10 to 30 (FAVK…GAFG), 40 to 60 (VIMP…LFLV), and 86 to 106 (GSFI…FMMV).

This sequence belongs to the MscL family. As to quaternary structure, homopentamer.

The protein resides in the cell inner membrane. Its function is as follows. Channel that opens in response to stretch forces in the membrane lipid bilayer. May participate in the regulation of osmotic pressure changes within the cell. This Paracidovorax citrulli (strain AAC00-1) (Acidovorax citrulli) protein is Large-conductance mechanosensitive channel.